Reading from the N-terminus, the 192-residue chain is Fibroblast growth factor 4B (192 aa).

The N-terminal stretch at 1–22 (MTVQLALVPILLLGTAAVMVHC) is a signal peptide.

Belongs to the heparin-binding growth factors family.

The protein localises to the secreted. Plays an important role in the regulation of embryonic development, cell proliferation, and cell differentiation. Good candidate for an inducing factor with possible roles both in mesoderm induction at the blastula stage and in the formation of the anteroposterior axis at the gastrula stage. The protein is Fibroblast growth factor 4B (fgf4-b) of Xenopus laevis (African clawed frog).